Here is a 557-residue protein sequence, read N- to C-terminus: Potassium-transporting ATPase potassium-binding subunit (557 aa).

The next 12 helical transmembrane spans lie at G5–S25, L63–G83, G132–I152, L170–I190, F253–V273, L283–V303, V329–A349, A356–V376, G379–G399, L416–M436, L484–A504, and L526–A546.

The protein belongs to the KdpA family. The system is composed of three essential subunits: KdpA, KdpB and KdpC.

It localises to the cell inner membrane. In terms of biological role, part of the high-affinity ATP-driven potassium transport (or Kdp) system, which catalyzes the hydrolysis of ATP coupled with the electrogenic transport of potassium into the cytoplasm. This subunit binds the periplasmic potassium ions and delivers the ions to the membrane domain of KdpB through an intramembrane tunnel. The sequence is that of Potassium-transporting ATPase potassium-binding subunit from Escherichia fergusonii (strain ATCC 35469 / DSM 13698 / CCUG 18766 / IAM 14443 / JCM 21226 / LMG 7866 / NBRC 102419 / NCTC 12128 / CDC 0568-73).